Reading from the N-terminus, the 270-residue chain is Putative ABC transporter ATP-binding protein MG304 homolog (270 aa).

In terms of domain architecture, ABC transporter spans 2-232 (LNVTNLSFTY…LHLFHQHHFT (231 aa)). Residue 36–43 (GHNGSGKS) coordinates ATP.

It belongs to the ABC transporter superfamily.

The sequence is that of Putative ABC transporter ATP-binding protein MG304 homolog from Mycoplasma pneumoniae (strain ATCC 29342 / M129 / Subtype 1) (Mycoplasmoides pneumoniae).